The following is a 190-amino-acid chain: GTP cyclohydrolase 1 (190 aa).

Residues Cys75, His78, and Cys146 each contribute to the Zn(2+) site.

This sequence belongs to the GTP cyclohydrolase I family. In terms of assembly, homomer.

The enzyme catalyses GTP + H2O = 7,8-dihydroneopterin 3'-triphosphate + formate + H(+). It participates in cofactor biosynthesis; 7,8-dihydroneopterin triphosphate biosynthesis; 7,8-dihydroneopterin triphosphate from GTP: step 1/1. This chain is GTP cyclohydrolase 1, found in Campylobacter jejuni subsp. jejuni serotype O:6 (strain 81116 / NCTC 11828).